Reading from the N-terminus, the 526-residue chain is Glutamate--cysteine ligase (526 aa).

Belongs to the glutamate--cysteine ligase type 1 family. Type 1 subfamily.

The enzyme catalyses L-cysteine + L-glutamate + ATP = gamma-L-glutamyl-L-cysteine + ADP + phosphate + H(+). Its pathway is sulfur metabolism; glutathione biosynthesis; glutathione from L-cysteine and L-glutamate: step 1/2. The chain is Glutamate--cysteine ligase from Shewanella amazonensis (strain ATCC BAA-1098 / SB2B).